The primary structure comprises 110 residues: Protein SPIRAL1-like 2 (110 aa).

A disordered region spans residues 28–110 (AVNKTPAETE…LDYLFGGGSN (83 aa)). A compositionally biased stretch (low complexity) spans 40-52 (AHAPPTQAAAANA). The span at 63-82 (LNSNSANNYMRAEGQNTGNF) shows a compositional bias: polar residues. At Ser67 the chain carries Phosphoserine. Over residues 95-110 (PGGGSSLDYLFGGGSN) the composition is skewed to gly residues.

The protein belongs to the SPIRAL1 family. Ubiquitous.

Its function is as follows. Acts redundantly with SPR1 in maintaining the cortical microtubules organization essential for anisotropic cell growth. The chain is Protein SPIRAL1-like 2 (SP1L2) from Arabidopsis thaliana (Mouse-ear cress).